The following is a 1408-amino-acid chain: DNA-directed RNA polymerase subunit beta' (1408 aa).

Residues C70, C72, C85, and C88 each contribute to the Zn(2+) site. Mg(2+) is bound by residues D460, D462, and D464. 4 residues coordinate Zn(2+): C822, C896, C903, and C906. Positions 1386–1408 (DTGEAPPLSEEETGEIRNSGYAV) are disordered.

The protein belongs to the RNA polymerase beta' chain family. The RNAP catalytic core consists of 2 alpha, 1 beta, 1 beta' and 1 omega subunit. When a sigma factor is associated with the core the holoenzyme is formed, which can initiate transcription. Mg(2+) is required as a cofactor. Requires Zn(2+) as cofactor.

It catalyses the reaction RNA(n) + a ribonucleoside 5'-triphosphate = RNA(n+1) + diphosphate. Its function is as follows. DNA-dependent RNA polymerase catalyzes the transcription of DNA into RNA using the four ribonucleoside triphosphates as substrates. The polypeptide is DNA-directed RNA polymerase subunit beta' (Nitrosospira multiformis (strain ATCC 25196 / NCIMB 11849 / C 71)).